The sequence spans 249 residues: ATP synthase subunit a, chloroplastic (249 aa).

The next 5 membrane-spanning stretches (helical) occupy residues 40–60, 97–117, 136–156, 201–221, and 222–242; these read QVLITSWVVIAILLGSAVLAV, VPFIGTLFLFIFVSNWSGALL, INTTVALALLTSAAYFYAGLS, LVVVVLVSLVPLVVPIPVMFL, and GLFTSGIQALIFATLAAAYIG.

The protein belongs to the ATPase A chain family. In terms of assembly, F-type ATPases have 2 components, CF(1) - the catalytic core - and CF(0) - the membrane proton channel. CF(1) has five subunits: alpha(3), beta(3), gamma(1), delta(1), epsilon(1). CF(0) has four main subunits: a, b, b' and c.

The protein resides in the plastid. It is found in the chloroplast thylakoid membrane. Its function is as follows. Key component of the proton channel; it plays a direct role in the translocation of protons across the membrane. The chain is ATP synthase subunit a, chloroplastic from Arabis hirsuta (Hairy rock-cress).